A 1078-amino-acid polypeptide reads, in one-letter code: Transmembrane protein 132B (1078 aa).

Residues 1-903 (MFGAASRMDT…LTDLEIGMYA (903 aa)) are Extracellular-facing. N-linked (GlcNAc...) asparagine glycosylation is found at Asn343, Asn366, and Asn381. Residues 834 to 887 (RGTPVGQEESTNKSTTPQSPMEGKNKLLKSGGPDAFTSFPTQGKSPDPNNPSDL) are disordered. The span at 841–852 (EESTNKSTTPQS) shows a compositional bias: polar residues. Residues 904-924 (LLCVFCLAILVFLINCVAFAW) traverse the membrane as a helical segment. The Cytoplasmic portion of the chain corresponds to 925 to 1078 (KYRHKRFAVS…DYMESLQDQM (154 aa)).

It belongs to the TMEM132 family.

The protein localises to the membrane. In Homo sapiens (Human), this protein is Transmembrane protein 132B (TMEM132B).